Reading from the N-terminus, the 241-residue chain is DNA-binding dual master transcriptional regulator RpaA (241 aa).

Residues 3 to 119 enclose the Response regulatory domain; the sequence is RILIIDDDPA…EMLARVRALL (117 aa). At Asp52 the chain carries 4-aspartylphosphate. The ompR/PhoB-type DNA-binding region spans 132–231; it reads SEILNQGPLT…VYGAGYCLEL (100 aa).

As to quaternary structure, interacts with reduced ferredoxin (petF). Interacts with CikA, RpaB, SasA, Sll0038 (pixG) and a number of other proteins. In terms of processing, phosphorylated by SasA; phosphorylation is maximal when KaiC phosphorylation is active during the circadian cycle. Dephosphorylated by CikA. CikA and SasA cooperation generates RpaA activity oscillation that is distinct from that generated by CikA or SasA alone and offset from the rhythm of KaiC phosphorylation.

The protein resides in the cytoplasm. In terms of biological role, response regulator of 2 two-component regulatory systems SasA/RpaA and CikA/RpaA involved in genome-wide circadian gene expression. The histidine kinases have opposing effects modulated by the clock oscillator proteins; SasA phosphorylates RpaA (stimulated by fully phosphorylated KaiC1) while CikA dephosphorylates phospho-RpaA (stimulated by the phospho-Ser-432-KaiC1-KaiB complex). The RpaA regulon is about 300 genes, and includes itself, cikA, sigE, sigG, genes involved in photosynthesis, carbon metabolism in the light and dark, phototaxis, CRISPR arrays 2 and 3 as well as nearly 90 ncRNAs. Genes are up- or down-regulated in its absence. Involved in regulation of primary sugar and amino acid metabolism and in adaptation to light changes. Regulates the accumulation of the monomeric photosystem I and the D1 protein under high light conditions. Overexpression causes cells to grow more slowly, increases levels of transcripts for clock oscillator genes in the light and the dark, increases levels of SigE protein, increases accumulation of sugar catabolic enzymes in the dark with concomitant decreases in most sugar metabolites. Plays a role in cell division; overexpression from the psbAII promoter increases expression of some cell-division-related genes, alters cell volume and changes the outer cell membrane and cell wall appearance. This chain is DNA-binding dual master transcriptional regulator RpaA, found in Synechocystis sp. (strain ATCC 27184 / PCC 6803 / Kazusa).